The following is a 346-amino-acid chain: GPALPP motifs-containing protein 1 (346 aa).

Disordered stretches follow at residues 1 to 283 (MARD…ESLM) and 289 to 308 (KLKS…IPFD). Ala2 is subject to N-acetylalanine. The GPALPP motif 1 motif lies at 7-12 (GPALPP). The residue at position 28 (Ser28) is a Phosphoserine. The GPALPP motif 2 motif lies at 32 to 37 (GPALPP). Acidic residues predominate over residues 60 to 69 (GNQESEEEDT). Residues 91-96 (GPALPP) carry the GPALPP motif 3 motif. Residue Ser104 is modified to Phosphoserine. Positions 106–115 (PRPIIGPALP) are enriched in pro residues. The GPALPP motif 4 signature appears at 111 to 116 (GPALPP). A compositionally biased stretch (basic and acidic residues) spans 123–132 (QKNDKGREDP). Phosphoserine is present on residues Ser136, Ser141, and Ser146. The segment covering 142 to 152 (EEAESGEDEDI) has biased composition (acidic residues). 2 stretches are compositionally biased toward basic and acidic residues: residues 169–193 (EFEK…KPIT) and 233–267 (PADR…KRLA). Lys277 participates in a covalent cross-link: Glycyl lysine isopeptide (Lys-Gly) (interchain with G-Cter in SUMO2). A compositionally biased stretch (basic and acidic residues) spans 293-308 (KAAEDKNKHQERIPFD). A Glycyl lysine isopeptide (Lys-Gly) (interchain with G-Cter in SUMO2) cross-link involves residue Lys314.

The chain is GPALPP motifs-containing protein 1 (Gpalpp1) from Mus musculus (Mouse).